Consider the following 31-residue polypeptide: Photosystem II reaction center protein T (31 aa).

The chain crosses the membrane as a helical span at residues 3–23 (SAAYILVLALALGVIFFAIAF).

The protein belongs to the PsbT family. As to quaternary structure, PSII is composed of 1 copy each of membrane proteins PsbA, PsbB, PsbC, PsbD, PsbE, PsbF, PsbH, PsbI, PsbJ, PsbK, PsbL, PsbM, PsbT, PsbX, PsbY, PsbZ, Psb30/Ycf12, peripheral proteins PsbO, CyanoQ (PsbQ), PsbU, PsbV and a large number of cofactors. It forms dimeric complexes.

It is found in the cellular thylakoid membrane. In terms of biological role, found at the monomer-monomer interface of the photosystem II (PS II) dimer, plays a role in assembly and dimerization of PSII. PSII is a light-driven water plastoquinone oxidoreductase, using light energy to abstract electrons from H(2)O, generating a proton gradient subsequently used for ATP formation. In Trichodesmium erythraeum (strain IMS101), this protein is Photosystem II reaction center protein T.